Consider the following 201-residue polypeptide: Recombination protein RecR (201 aa).

The C4-type zinc finger occupies Cys-60 to Cys-75. The 96-residue stretch at Gly-83–Pro-178 folds into the Toprim domain.

The protein belongs to the RecR family.

May play a role in DNA repair. It seems to be involved in an RecBC-independent recombinational process of DNA repair. It may act with RecF and RecO. In Syntrophobacter fumaroxidans (strain DSM 10017 / MPOB), this protein is Recombination protein RecR.